The sequence spans 679 residues: Enzymatic polyprotein (679 aa).

Positions 40 to 130 (LHCFVDTGAS…LYEPFIQFTD (91 aa)) are protease. Residue Asp45 is part of the active site. The Reverse transcriptase domain occupies 272 to 452 (LKVIKPSKSP…KKINFLGLEI (181 aa)).

The protein belongs to the caulimoviridae enzymatic polyprotein family.

The catalysed reaction is DNA(n) + a 2'-deoxyribonucleoside 5'-triphosphate = DNA(n+1) + diphosphate. Its function is as follows. Encodes for at least two polypeptides: protease (PR) and reverse transcriptase (RT). The protease processes the polyprotein in cis. Reverse transcriptase is multifunctional enzyme that converts the viral RNA genome into dsDNA in viral cytoplasmic capsids. This enzyme displays a DNA polymerase activity that can copy either DNA or RNA templates, and a ribonuclease H (RNase H) activity that cleaves the RNA strand of RNA-DNA heteroduplexes in a partially processive 3'- to 5'-endonucleasic mode. Neo-synthesized pregenomic RNA (pgRNA) are encapsidated, and reverse-transcribed inside the nucleocapsid. Partial (+)DNA is synthesized from the (-)DNA template and generates the relaxed circular DNA (RC-DNA) genome. After budding and infection, the RC-DNA migrates in the nucleus, and is converted into a plasmid-like covalently closed circular DNA (cccDNA). The protein is Enzymatic polyprotein of Cauliflower mosaic virus (strain CM-1841) (CaMV).